A 61-amino-acid chain; its full sequence is Large ribosomal subunit protein eL24 (61 aa).

Zn(2+)-binding residues include cysteine 7, cysteine 10, cysteine 33, and cysteine 37. The C4-type zinc finger occupies 7–37 (CSFCGGDIPPATGMMHVRNDGTILWFCSNKC).

It belongs to the eukaryotic ribosomal protein eL24 family. Part of the 50S ribosomal subunit. Forms a cluster with proteins L3 and L14. It depends on Zn(2+) as a cofactor.

Binds to the 23S rRNA. The protein is Large ribosomal subunit protein eL24 of Metallosphaera sedula (strain ATCC 51363 / DSM 5348 / JCM 9185 / NBRC 15509 / TH2).